The sequence spans 202 residues: MARQGDIHRVTGETDVKVRLDLDGSGQCQASTGVPFLDHMLHQISSHGLIDLEINAVGDTHIDDHHTNEDVGIAVGQALAQALGDRRGIHRFGHFAAPLDEALVQVALDCSGRPHLSYSLSIPSQKIGSYDTELVKEFFVAVVNNSGLTLHIRQLDGVNSHHIVEACFKAFSRALRMATEIDPRRAGAIPSSKGVLEQAGAN.

It belongs to the imidazoleglycerol-phosphate dehydratase family.

It is found in the cytoplasm. It catalyses the reaction D-erythro-1-(imidazol-4-yl)glycerol 3-phosphate = 3-(imidazol-4-yl)-2-oxopropyl phosphate + H2O. Its pathway is amino-acid biosynthesis; L-histidine biosynthesis; L-histidine from 5-phospho-alpha-D-ribose 1-diphosphate: step 6/9. This Parasynechococcus marenigrum (strain WH8102) protein is Imidazoleglycerol-phosphate dehydratase.